The primary structure comprises 64 residues: Large ribosomal subunit protein bL33c (64 aa).

It belongs to the bacterial ribosomal protein bL33 family.

The protein localises to the plastid. Its subcellular location is the chloroplast. In Trieres chinensis (Marine centric diatom), this protein is Large ribosomal subunit protein bL33c (rpl33).